The primary structure comprises 207 residues: Guanylate kinase (207 aa).

A Guanylate kinase-like domain is found at 3–181 (GQLFVICGPS…AVEMVVSIVR (179 aa)). Position 10–17 (10–17 (GPSGAGKT)) interacts with ATP.

The protein belongs to the guanylate kinase family.

Its subcellular location is the cytoplasm. It carries out the reaction GMP + ATP = GDP + ADP. Functionally, essential for recycling GMP and indirectly, cGMP. This is Guanylate kinase (gmk) from Thermotoga maritima (strain ATCC 43589 / DSM 3109 / JCM 10099 / NBRC 100826 / MSB8).